The sequence spans 236 residues: MMRQSIRPLRAFSSEVSWIARRTQASLAKPGDLVPNKPEPSKNEQEPRFPRSIQALHLKPLKREAEHGIPSCDLQLRSFSVQPLEFFSDFALRAAYYLGLPAYGPVPLPRITERWTVPRDNFIFKKSQENFERKTLRRLIQIRDGNPETVQLWLAYLRKHQFYGVGMKANMWEFSELGEGKKMDALPEAEKGEIDAKWSHIGQTKTIGTMEKVEQILNQRRFREAAGLRVPPTTEA.

Residues 1-24 (MMRQSIRPLRAFSSEVSWIARRTQ) constitute a mitochondrion transit peptide. The segment at 29–49 (KPGDLVPNKPEPSKNEQEPRF) is disordered. Over residues 39 to 49 (EPSKNEQEPRF) the composition is skewed to basic and acidic residues.

Belongs to the universal ribosomal protein uS10 family. Part of the mitochondrial small ribosomal subunit.

Its subcellular location is the mitochondrion. Functionally, involved in mitochondrial genome encoded proteins translation. Involved in the binding of tRNA to the ribosomes. This is Small ribosomal subunit protein uS10m (RSM10) from Gibberella zeae (strain ATCC MYA-4620 / CBS 123657 / FGSC 9075 / NRRL 31084 / PH-1) (Wheat head blight fungus).